Consider the following 387-residue polypeptide: Protein kinase ORF16 (387 aa).

The 300-residue stretch at 82 to 381 (KKILSRVGPE…VTLMTELSLL (300 aa)) folds into the Protein kinase domain. Lysine 122 serves as a coordination point for ATP. Aspartate 226 serves as the catalytic Proton acceptor.

The protein belongs to the protein kinase superfamily. Ser/Thr protein kinase family.

It catalyses the reaction L-seryl-[protein] + ATP = O-phospho-L-seryl-[protein] + ADP + H(+). The catalysed reaction is L-threonyl-[protein] + ATP = O-phospho-L-threonyl-[protein] + ADP + H(+). The chain is Protein kinase ORF16 (ORF16) from Ictalurid herpesvirus 1 (strain Auburn) (IcHV-1).